Reading from the N-terminus, the 471-residue chain is Ribulose bisphosphate carboxylase large chain (471 aa).

Positions 119 and 169 each coordinate substrate. The Proton acceptor role is filled by K171. Residue K173 participates in substrate binding. Mg(2+) is bound by residues K197, D199, and E200. K197 is subject to N6-carboxylysine. The Proton acceptor role is filled by H290. Residues R291, H323, and S375 each coordinate substrate.

It belongs to the RuBisCO large chain family. Type I subfamily. In terms of assembly, heterohexadecamer of 8 large chains and 8 small chains; disulfide-linked. The disulfide link is formed within the large subunit homodimers. Mg(2+) is required as a cofactor. In terms of processing, the disulfide bond which can form in the large chain dimeric partners within the hexadecamer appears to be associated with oxidative stress and protein turnover.

The protein resides in the carboxysome. The enzyme catalyses 2 (2R)-3-phosphoglycerate + 2 H(+) = D-ribulose 1,5-bisphosphate + CO2 + H2O. It catalyses the reaction D-ribulose 1,5-bisphosphate + O2 = 2-phosphoglycolate + (2R)-3-phosphoglycerate + 2 H(+). In terms of biological role, ruBisCO catalyzes two reactions: the carboxylation of D-ribulose 1,5-bisphosphate, the primary event in carbon dioxide fixation, as well as the oxidative fragmentation of the pentose substrate in the photorespiration process. Both reactions occur simultaneously and in competition at the same active site. This chain is Ribulose bisphosphate carboxylase large chain, found in Crocosphaera subtropica (strain ATCC 51142 / BH68) (Cyanothece sp. (strain ATCC 51142)).